Here is a 132-residue protein sequence, read N- to C-terminus: uncharacterized protein (132 aa).

Belongs to the mycobacterial PPE family.

This is an uncharacterized protein from Mycobacterium tuberculosis (strain ATCC 25618 / H37Rv).